The chain runs to 115 residues: NAD(P)H-quinone oxidoreductase subunit M (115 aa).

The protein belongs to the complex I NdhM subunit family. As to quaternary structure, NDH-1 can be composed of about 15 different subunits; different subcomplexes with different compositions have been identified which probably have different functions.

The protein resides in the cellular thylakoid membrane. The enzyme catalyses a plastoquinone + NADH + (n+1) H(+)(in) = a plastoquinol + NAD(+) + n H(+)(out). It carries out the reaction a plastoquinone + NADPH + (n+1) H(+)(in) = a plastoquinol + NADP(+) + n H(+)(out). In terms of biological role, NDH-1 shuttles electrons from an unknown electron donor, via FMN and iron-sulfur (Fe-S) centers, to quinones in the respiratory and/or the photosynthetic chain. The immediate electron acceptor for the enzyme in this species is believed to be plastoquinone. Couples the redox reaction to proton translocation, and thus conserves the redox energy in a proton gradient. Cyanobacterial NDH-1 also plays a role in inorganic carbon-concentration. This is NAD(P)H-quinone oxidoreductase subunit M from Synechococcus sp. (strain CC9902).